Reading from the N-terminus, the 433-residue chain is 23S rRNA (uracil(1939)-C(5))-methyltransferase RlmD (433 aa).

Positions 1 to 53 (MPTAVIESLDHEGRGIARVEGKAVFIEGGLPGETVEYRVLRSKPNYEQAEATR) constitute a TRAM domain. Cysteine 66, cysteine 72, cysteine 75, and cysteine 154 together coordinate [4Fe-4S] cluster. Positions 263, 292, 297, 313, 341, and 362 each coordinate S-adenosyl-L-methionine. The active-site Nucleophile is cysteine 389.

The protein belongs to the class I-like SAM-binding methyltransferase superfamily. RNA M5U methyltransferase family. RlmD subfamily.

The catalysed reaction is uridine(1939) in 23S rRNA + S-adenosyl-L-methionine = 5-methyluridine(1939) in 23S rRNA + S-adenosyl-L-homocysteine + H(+). Its function is as follows. Catalyzes the formation of 5-methyl-uridine at position 1939 (m5U1939) in 23S rRNA. This chain is 23S rRNA (uracil(1939)-C(5))-methyltransferase RlmD, found in Azoarcus sp. (strain BH72).